A 465-amino-acid chain; its full sequence is Interferon-inducible GTPase 5 (465 aa).

Positions Thr53–Asp235 constitute an IRG-type G domain. GTP is bound by residues Glu62–Ser69, Thr87–Glu91, Lys169–Asp171, and Ser216–Leu218. Phosphoserine occurs at positions 247 and 304. The interval Glu405–Pro438 is disordered.

Belongs to the TRAFAC class dynamin-like GTPase superfamily. IRG family.

The protein localises to the cell projection. The protein resides in the cilium. It is found in the flagellum. Its subcellular location is the lipid droplet. It catalyses the reaction GTP + H2O = GDP + phosphate + H(+). Required for sperm motility and therefore male fertility, via positive regulation of spermatozoa fibrous sheath formation. This Bos taurus (Bovine) protein is Interferon-inducible GTPase 5 (IRGC).